Consider the following 472-residue polypeptide: Argininosuccinate lyase (472 aa).

Belongs to the lyase 1 family. Argininosuccinate lyase subfamily.

Its subcellular location is the cytoplasm. The enzyme catalyses 2-(N(omega)-L-arginino)succinate = fumarate + L-arginine. It participates in amino-acid biosynthesis; L-arginine biosynthesis; L-arginine from L-ornithine and carbamoyl phosphate: step 3/3. The protein is Argininosuccinate lyase of Rhodococcus opacus (strain B4).